The primary structure comprises 417 residues: Phosphoglycerate kinase (417 aa).

14 residues coordinate (2R)-3-phosphoglycerate: Val-23, Asp-24, Phe-25, Asn-26, Gln-38, Arg-39, Ser-62, His-63, Gly-65, Arg-66, Leu-122, Arg-123, His-170, and Arg-171. Residue Gly-214 coordinates ADP. Gly-214 contributes to the CDP binding site. AMP-binding residues include Ala-215 and Lys-216. An ATP-binding site is contributed by Ala-215. Mg(2+) is bound at residue Ala-215. CDP is bound at residue Asp-219. Asp-219 contacts Mg(2+). Lys-220 contacts AMP. Lys-220 is a binding site for ATP. An ADP-binding site is contributed by Gly-238. A CDP-binding site is contributed by Gly-238. 2 residues coordinate AMP: Gly-239 and Gly-313. Residues Gly-239 and Gly-313 each contribute to the ATP site. Positions 338, 340, and 343 each coordinate CDP. Phe-343 is a binding site for ADP. Glu-344 lines the AMP pocket. Positions 344, 375, and 376 each coordinate ATP. Asp-375 serves as a coordination point for Mg(2+).

Belongs to the phosphoglycerate kinase family. Monomer. Mg(2+) serves as cofactor.

It localises to the cytoplasm. It catalyses the reaction (2R)-3-phosphoglycerate + ATP = (2R)-3-phospho-glyceroyl phosphate + ADP. The protein operates within carbohydrate degradation; glycolysis; pyruvate from D-glyceraldehyde 3-phosphate: step 2/5. Its function is as follows. Catalyzes one of the two ATP producing reactions in the glycolytic pathway via the reversible conversion of 1,3-diphosphoglycerate to 3-phosphoglycerate. In addition to its role as a glycolytic enzyme, it seems that PGK-1 acts as a polymerase alpha cofactor protein (primer recognition protein). May play a role in sperm motility. This Gallus gallus (Chicken) protein is Phosphoglycerate kinase (PGK).